The sequence spans 411 residues: 2-oxoglutarate-dependent dioxygenase AOP3 (411 aa).

A Fe2OG dioxygenase domain is found at 259–356 (GNASVGAKEA…RYAAALFSNP (98 aa)). Positions 279, 281, and 336 each coordinate Fe cation. Arg347 is a 2-oxoglutarate binding site.

This sequence belongs to the iron/ascorbate-dependent oxidoreductase family. The cofactor is Fe(2+). Not expressed.

Its function is as follows. 2-oxoglutarate-dependent dioxygenase involved in glucosinolates biosynthesis. Catalyzes the conversion of methylsulfinylalkyl glucosinolates to hydroxyalkyl glucosinolates. This Arabidopsis thaliana (Mouse-ear cress) protein is 2-oxoglutarate-dependent dioxygenase AOP3 (AOP3).